A 500-amino-acid chain; its full sequence is Cytochrome P450 71D13 (500 aa).

Residues 3–23 traverse the membrane as a helical; Signal-anchor for type II membrane protein segment; that stretch reads LQISSAIIILVVTYTISLLII. A heme-binding site is contributed by Cys439.

The protein belongs to the cytochrome P450 family. The cofactor is heme.

The protein resides in the endoplasmic reticulum membrane. The catalysed reaction is (4S)-limonene + reduced [NADPH--hemoprotein reductase] + O2 = (1S,6R)-isopiperitenol + oxidized [NADPH--hemoprotein reductase] + H2O + H(+). Its function is as follows. Hydroxylates (-)-(4S)-limonene to (-)-trans-isopiperitenol, a precursor of (-)-menthol, responsible for the cooling sensation of peppermint. The chain is Cytochrome P450 71D13 (CYP71D13) from Mentha piperita (Peppermint).